The primary structure comprises 189 residues: Putative lipoprotein LppK (189 aa).

Positions 1 to 22 (MRRNIRVTLGAATIVAALGLSG) are cleaved as a signal peptide. Cys23 is lipidated: N-palmitoyl cysteine. Residue Cys23 is the site of S-diacylglycerol cysteine attachment. Disordered stretches follow at residues 26–49 (PEFKRSSPPAPSLPPVTSSPLEAA) and 166–189 (MGNSPDSTPSATSPAPAPSPTPPG). A compositionally biased stretch (low complexity) spans 169–179 (SPDSTPSATSP). Pro residues predominate over residues 180–189 (APAPSPTPPG).

It belongs to the MTB12 family.

Its subcellular location is the cell membrane. The protein is Putative lipoprotein LppK (lppK) of Mycobacterium tuberculosis (strain CDC 1551 / Oshkosh).